A 127-amino-acid polypeptide reads, in one-letter code: MAYGVKIAKGDAYKRAARKRRHIRVRKHLSGSPERPRLVVTRSNRHIVAQVIDDIAGHTLASASTLDTSIRGGEGDKSAQAQQVGALVAERAKAAGVEAVVFDRGGNQYAGRIAALADAAREAGLKF.

The protein belongs to the universal ribosomal protein uL18 family. As to quaternary structure, part of the 50S ribosomal subunit; part of the 5S rRNA/L5/L18/L25 subcomplex. Contacts the 5S and 23S rRNAs.

This is one of the proteins that bind and probably mediate the attachment of the 5S RNA into the large ribosomal subunit, where it forms part of the central protuberance. The protein is Large ribosomal subunit protein uL18 of Streptomyces griseus subsp. griseus (strain JCM 4626 / CBS 651.72 / NBRC 13350 / KCC S-0626 / ISP 5235).